A 680-amino-acid chain; its full sequence is Trehalase (680 aa).

The tract at residues 1–27 (MVLHAQPPDQSTETAREAKALAGATDG) is disordered.

Belongs to the glycosyl hydrolase 15 family. As to quaternary structure, homomultimer. Phosphate serves as cofactor.

It catalyses the reaction alpha,alpha-trehalose + H2O = alpha-D-glucose + beta-D-glucose. The protein operates within glycan degradation; trehalose degradation; D-glucose from alpha,alpha-trehalose: step 1/1. Catalyzes the hydrolysis of alpha,alpha-trehalose into two molecules of D-glucose. In Mycobacterium tuberculosis (strain ATCC 25618 / H37Rv), this protein is Trehalase.